Here is a 388-residue protein sequence, read N- to C-terminus: MSHCKFEQPRHGSLGFLPRKRASRQRGKVKAFPKDDASKPVHLTAFLGYKAGMTHIVRDLDRPGSKMHKREILEAVTVIETPPMVVVGVVGYVETPRGLRSLTTVWAEHLSEEVKRRFYKNWFKSKKKAFTKYAKKYAESTQSINRELERIKKYCSVVRVLAHTQIRKTPLAQKKAHLMEIQVNGGSVADKVEWAREHFEKTVDIKSTFEQNEMIDVIGVTRGKGNEGTTARWGTKRLPRKTHRGLRKVACIGAWHPANVQWTVARAGNAGYMHRTQLNSKIYRIGAGDDAKNASTDFDATEKRITPMGGFVRYGVVENDFVMLNGATPGPVKRVLTLRKSLLTHTSRKALEPVSLKWIDTASKFGHGRFQTPAEAKQFLGTLKKDVA.

Basic and acidic residues predominate over residues 1–10 (MSHCKFEQPR). The disordered stretch occupies residues 1–34 (MSHCKFEQPRHGSLGFLPRKRASRQRGKVKAFPK). Position 13 is a phosphoserine (Ser-13). Residues 18–31 (PRKRASRQRGKVKA) are compositionally biased toward basic residues. Residues Ser-65, Ser-140, Ser-143, Ser-207, Ser-295, and Ser-355 each carry the phosphoserine modification. At Thr-372 the chain carries Phosphothreonine.

The protein belongs to the universal ribosomal protein uL3 family. As to quaternary structure, component of the large ribosomal subunit (LSU). Mature yeast ribosomes consist of a small (40S) and a large (60S) subunit. The 40S small subunit contains 1 molecule of ribosomal RNA (18S rRNA) and at least 33 different proteins. The large 60S subunit contains 3 rRNA molecules (25S, 5.8S and 5S rRNA) and at least 46 different proteins. uL3 forms together with ES39L one of the contact sites for the signal recognition particle that targets ribosomes to the endoplasmic reticulum membrane.

The protein localises to the cytoplasm. Its function is as follows. Component of the ribosome, a large ribonucleoprotein complex responsible for the synthesis of proteins in the cell. The small ribosomal subunit (SSU) binds messenger RNAs (mRNAs) and translates the encoded message by selecting cognate aminoacyl-transfer RNA (tRNA) molecules. The large subunit (LSU) contains the ribosomal catalytic site termed the peptidyl transferase center (PTC), which catalyzes the formation of peptide bonds, thereby polymerizing the amino acids delivered by tRNAs into a polypeptide chain. The nascent polypeptides leave the ribosome through a tunnel in the LSU and interact with protein factors that function in enzymatic processing, targeting, and the membrane insertion of nascent chains at the exit of the ribosomal tunnel. uL3 plays a role in coordinating processes of accommodating the aminoacyl-tRNA in the PTC. The chain is Large ribosomal subunit protein uL3A (rpl301) from Schizosaccharomyces pombe (strain 972 / ATCC 24843) (Fission yeast).